We begin with the raw amino-acid sequence, 332 residues long: Adenosine receptor A2b (332 aa).

Residues 1-8 (MPLEAQDA) lie on the Extracellular side of the membrane. A helical transmembrane segment spans residues 9–33 (VYVALELALAALSVTGNVLVCAAVG). Residues 34-43 (TSSALQTPTN) are Cytoplasmic-facing. Residues 44-67 (YFLVSLAAADVAVGLFAIPFAVTI) form a helical membrane-spanning segment. The Extracellular segment spans residues 68–78 (SLGFCTDFHSC). Residues Cys78 and Cys170 are joined by a disulfide bond. Residues 79 to 101 (LFLACFVLVLTQSSIFSLLAVAV) form a helical membrane-spanning segment. The Cytoplasmic segment spans residues 102-121 (DRYLAVRVPLRYKSLVTGAR). The helical transmembrane segment at 122–144 (ARGVIAALWVLAFGIGLTPFLGW) threads the bilayer. Residues 145–177 (NDRKIATNCTEPGDAATNVSCCLIRCLFENVVP) lie on the Extracellular side of the membrane. N-linked (GlcNAc...) asparagine glycans are attached at residues Asn152 and Asn162. Glu173 lines the adenosine pocket. The chain crosses the membrane as a helical span at residues 178–202 (MSYMVYFNFFGCVLPPLLIMLVIYV). Topologically, residues 203-234 (KIFLVACRQLQRTELMDHSRTVLQREIHAAKS) are cytoplasmic. A helical transmembrane segment spans residues 235–258 (LALIVGIFALCWLPVHTINCASLF). Asn253 is an adenosine binding site. Residues 259-266 (QPTWAKVK) lie on the Extracellular side of the membrane. Residues 267–290 (PKWAINTAILLSHANSAVNPIVYA) form a helical membrane-spanning segment. Positions 278 and 279 each coordinate adenosine. The Cytoplasmic portion of the chain corresponds to 291-332 (YRNRDFRYTFHKIISRYILCRTHILKSGEGQVGSQPTLQLGL). A lipid anchor (S-palmitoyl cysteine) is attached at Cys310.

Belongs to the G-protein coupled receptor 1 family.

It localises to the cell membrane. Its function is as follows. Receptor for adenosine. The activity of this receptor is mediated by G proteins which activate adenylyl cyclase. This Bos taurus (Bovine) protein is Adenosine receptor A2b (ADORA2B).